The chain runs to 354 residues: Guanine nucleotide-binding protein G(i) subunit alpha (354 aa).

Residue Gly-2 is the site of N-myristoyl glycine attachment. Cys-3 is lipidated: S-palmitoyl cysteine. The G-alpha domain maps to 32 to 354; sequence REVKLLLLGA…KNNLKDCGLF (323 aa). The tract at residues 35–48 is G1 motif; sequence KLLLLGAGESGKST. GTP-binding positions include 40–47, 175–181, 200–204, 269–272, and Ala-326; these read GAGESGKS, LRTRVKT, DVGGQ, and NKKD. Residues Ser-47 and Thr-181 each coordinate Mg(2+). The interval 173-181 is G2 motif; that stretch reads DVLRTRVKT. Residues 196–205 are G3 motif; that stretch reads FKMFDVGGQR. Positions 265 to 272 are G4 motif; it reads ILFLNKKD. The segment at 324 to 329 is G5 motif; that stretch reads TCATDT.

The protein belongs to the G-alpha family. G(i/o/t/z) subfamily. G proteins are composed of 3 units; alpha, beta and gamma. The alpha chain contains the guanine nucleotide binding site.

In terms of biological role, guanine nucleotide-binding proteins (G proteins) are involved as modulators or transducers in various transmembrane signaling systems. This chain is Guanine nucleotide-binding protein G(i) subunit alpha, found in Planorbella trivolvis (Marsh rams-horn).